The chain runs to 390 residues: Glucose-fructose oxidoreductase domain-containing protein 1 (390 aa).

Residues 1–21 form the signal peptide; it reads MLPGVGVFGTSLTSRVIIPLL. N161, N270, and N354 each carry an N-linked (GlcNAc...) asparagine glycan.

It belongs to the Gfo/Idh/MocA family. As to quaternary structure, homodimer.

It is found in the secreted. Functionally, probably catalytically inactive enzyme. Does not bind NAD or NADP. This is Glucose-fructose oxidoreductase domain-containing protein 1 (gfod1) from Xenopus tropicalis (Western clawed frog).